Here is a 150-residue protein sequence, read N- to C-terminus: Avidin-related protein 4/5 (150 aa).

An N-terminal signal peptide occupies residues methionine 1–serine 24. The Avidin-like domain maps to arginine 26–threonine 147. The cysteines at positions 28 and 105 are disulfide-linked. Biotin-binding residues include asparagine 36, serine 40, tyrosine 57, threonine 59, and aspartate 63. 2 N-linked (GlcNAc...) asparagine glycosylation sites follow: asparagine 67 and asparagine 93. Residues serine 95 and asparagine 140 each contribute to the biotin site. The N-linked (GlcNAc...) asparagine glycan is linked to asparagine 141.

This sequence belongs to the avidin/streptavidin family. As to quaternary structure, homotetramer.

The protein localises to the secreted. Forms a strong non-covalent specific complex with biotin. The sequence is that of Avidin-related protein 4/5 (AVR4) from Gallus gallus (Chicken).